We begin with the raw amino-acid sequence, 129 residues long: Lysozyme C (129 aa).

One can recognise a C-type lysozyme domain in the interval 1–129 (KVYGRCELAA…VNAWIRGCRL (129 aa)). Disulfide bonds link C6–C127, C30–C115, C64–C80, and C76–C94. Residues E35 and D52 contribute to the active site.

This sequence belongs to the glycosyl hydrolase 22 family. Monomer.

The protein resides in the secreted. It carries out the reaction Hydrolysis of (1-&gt;4)-beta-linkages between N-acetylmuramic acid and N-acetyl-D-glucosamine residues in a peptidoglycan and between N-acetyl-D-glucosamine residues in chitodextrins.. Functionally, lysozymes have primarily a bacteriolytic function; those in tissues and body fluids are associated with the monocyte-macrophage system and enhance the activity of immunoagents. In Syrmaticus reevesii (Reeves's pheasant), this protein is Lysozyme C (LYZ).